Reading from the N-terminus, the 308-residue chain is Serpentine receptor class V-1 (308 aa).

A run of 7 helical transmembrane segments spans residues 15-35 (VSTA…YILF), 46-68 (PFFR…STFF), 88-108 (VVPI…IIFI), 135-155 (LLLI…STDF), 184-204 (AMVD…AIFI), 222-242 (LALS…CSLL), and 256-276 (TMWF…LLAL).

The protein belongs to the nematode receptor-like protein srv family.

It localises to the membrane. This is Serpentine receptor class V-1 (srv-1) from Caenorhabditis elegans.